A 449-amino-acid polypeptide reads, in one-letter code: Phosphoglucosamine mutase (449 aa).

The active-site Phosphoserine intermediate is Ser-104. Residues Ser-104, Asp-243, Asp-245, and Asp-247 each coordinate Mg(2+). The residue at position 104 (Ser-104) is a Phosphoserine.

The protein belongs to the phosphohexose mutase family. The cofactor is Mg(2+). Post-translationally, activated by phosphorylation.

The catalysed reaction is alpha-D-glucosamine 1-phosphate = D-glucosamine 6-phosphate. Catalyzes the conversion of glucosamine-6-phosphate to glucosamine-1-phosphate. The protein is Phosphoglucosamine mutase of Xanthomonas euvesicatoria pv. vesicatoria (strain 85-10) (Xanthomonas campestris pv. vesicatoria).